The primary structure comprises 495 residues: Catalase (495 aa).

Residues 1-25 (MSNNKKLTSLFGAPVSDRENSMTAG) are disordered. Active-site residues include H55 and N128. Heme is bound at residue Y338.

Belongs to the catalase family. Homodimer. The cofactor is heme.

It catalyses the reaction 2 H2O2 = O2 + 2 H2O. Decomposes hydrogen peroxide into water and oxygen; serves to protect cells from the toxic effects of hydrogen peroxide. This is Catalase (katA) from Staphylococcus saprophyticus subsp. saprophyticus (strain ATCC 15305 / DSM 20229 / NCIMB 8711 / NCTC 7292 / S-41).